The primary structure comprises 264 residues: Iodotyrosine deiodinase (264 aa).

FMN-binding positions include 75-79 (RRTVR) and 103-104 (SG). 3-iodo-L-tyrosine is bound by residues Ala-105, Glu-132, Tyr-136, and Lys-157. FMN is bound by residues 212 to 214 (TST) and Arg-254.

This sequence belongs to the nitroreductase family. Requires FMN as cofactor.

It catalyses the reaction 2 iodide + L-tyrosine + 2 NADP(+) = 3,5-diiodo-L-tyrosine + 2 NADPH + H(+). It carries out the reaction iodide + L-tyrosine + NADP(+) = 3-iodo-L-tyrosine + NADPH. The enzyme catalyses 3-iodo-L-tyrosine + iodide + NADP(+) = 3,5-diiodo-L-tyrosine + NADPH + H(+). The catalysed reaction is L-tyrosine + chloride + NADP(+) = 3-chloro-L-tyrosine + NADPH. It catalyses the reaction bromide + L-tyrosine + NADP(+) = 3-bromo-L-tyrosine + NADPH. In terms of biological role, catalyzes the dehalogenation of halotyrosines such as 3,5-diiodo-L-tyrosine. Likely to also catalyze the dehalogenation of other halotyrosines such as 3-bromo-L-tyrosine, 3-chloro-L-tyrosine and 3-iodo-L-tyrosine. In Nematostella vectensis (Starlet sea anemone), this protein is Iodotyrosine deiodinase.